Here is a 412-residue protein sequence, read N- to C-terminus: Yellow-related salivary protein LJM17 (412 aa).

Positions M1–G18 are cleaved as a signal peptide. N29 carries an N-linked (GlcNAc...) asparagine glycan.

Belongs to the major royal jelly protein family. As to expression, salivary gland.

The protein resides in the secreted. Probably modulates blood feeding of sand flies on vertebrate species by binding and sequestering different mediators involved in the host response. Binds biogenic amines. Binds serotonin with high affinity. Binds noradrenaline but not adrenaline. Binds dopamine and octopamine. Binds histamine. Inhibits host smooth muscle contraction induced by histamine in bioassay with guinea pig ileum. Immunogenic; elicits antibody production in the host. Functions as a chemoattractant for host neutrophils; likely acts through a G-protein-coupled receptor and effect is dependent on calcium influx. The sequence is that of Yellow-related salivary protein LJM17 from Lutzomyia longipalpis (Sand fly).